The primary structure comprises 46 residues: uncharacterized protein (46 aa).

This is an uncharacterized protein from Haemophilus influenzae (strain ATCC 51907 / DSM 11121 / KW20 / Rd).